A 538-amino-acid polypeptide reads, in one-letter code: MAKLSVNDLNDFLSPGAVCIKPAQVKKQESKNDIRIDGDAYYEVTKDTGETSELGIASISLNDCLACSGCITSAETVLVNLQSYQEVLKHLESRKSQEILYVSLSPQVRANLAAYYGLSLQEIQAVLEMVFIGKLGFHAILDTNASREIVLQQCAQEFCNSWLQSRAHKNQNQVTNSVVNEHPLIPHSTSQISGVHSNTSSNSGINENAVLPILSSSCPGWICYVEKTHSNLIPNLSRVRSPQQACGRILKDWAVQQFSMQRNDVWHLSLMPCFDKKLEASRDEFSENGVRDVDSVLTPKELVEMFKFLRIDPIELTKNPIPFQQSTDAIPFWYPRITYEEQIGSSSGGYMGYVLSYAAKMLFGIDDVGPYVSMNNKNGDLTEYTLRHPETNEQLISMATCYGFRNIQNLVRRVHGNSSVRKGRVLLKKRVRSNAQNPTEEPSRYDYVEVMACPGGCINGGGQLPFPSVERIVSARDWMQQVEKLYYEPGTRSVDQSAVSYMLEQWVKDPTLTPKFLHTSYRAVQTDNDNPLLLANKW.

Cys19, Cys64, Cys67, Cys70, Cys218, Cys273, Cys453, and Cys457 together coordinate [4Fe-4S] cluster.

It belongs to the NARF family.

The protein localises to the cytoplasm. Its subcellular location is the nucleus. Component of the cytosolic Fe/S protein assembly machinery. Required for maturation of extramitochondrial Fe/S proteins. May play a role in the transfer of pre-assembled Fe/S clusters to target apoproteins. The sequence is that of Cytosolic Fe-S cluster assembly factor NAR1 homolog from Schizosaccharomyces pombe (strain 972 / ATCC 24843) (Fission yeast).